The chain runs to 638 residues: Voltage-gated potassium channel KCNC2 (638 aa).

Over 1–229 (MGKIENNERV…EDPYSSRAAR (229 aa)) the chain is Cytoplasmic. The tract at residues 47-75 (LTAAGDKLQPLPPPLSPPPRPPPLSPVPS) is disordered. The segment covering 56–72 (PLPPPLSPPPRPPPLSP) has biased composition (pro residues). Zn(2+) contacts are provided by histidine 124, cysteine 130, cysteine 151, and cysteine 152. Residues 230–248 (FIAFASLFFILVSITTFCL) traverse the membrane as a helical segment. Residues asparagine 259 and asparagine 266 are each glycosylated (N-linked (GlcNAc...) asparagine). A helical transmembrane segment spans residues 284 to 303 (YVEGVCVVWFTFEFLVRIVF). Over 304 to 314 (SPNKLEFIKNL) the chain is Cytoplasmic. The chain crosses the membrane as a helical span at residues 315-337 (LNIIDFVAILPFYLEVGLSGLSS). A helical; Voltage-sensor membrane pass occupies residues 346 to 368 (FLRVVRFVRILRIFKLTRHFVGL). Residues 369–381 (RVLGHTLRASTNE) are Cytoplasmic-facing. The helical transmembrane segment at 382–401 (FLLLIIFLALGVLIFATMIY) threads the bilayer. Residues threonine 437, leucine 438, glycine 439, and tyrosine 440 each contribute to the K(+) site. The short motif at 437-442 (TLGYGD) is the Selectivity filter element. Residues 451 to 473 (MLVGALCALAGVLTIAMPVPVIV) traverse the membrane as a helical segment. Over 474–638 (NNFGMYYSLA…RSRSPIPSIL (165 aa)) the chain is Cytoplasmic. Residues 538-572 (SVLSGDDSTGSEPPLSPPERLPIRRSSTRDKNRRG) form a disordered region. Serine 564 bears the Phosphoserine; by PKA mark. A Phosphoserine modification is found at serine 600.

It belongs to the potassium channel family. C (Shaw) (TC 1.A.1.2) subfamily. Kv3.2/KCNC2 sub-subfamily. In terms of assembly, homotetramer and heterotetramer with other channel-forming alpha subunits, such as KCNC1. Interacts with KCNC1. Homotetramer or heterotetramer channel activity is regulated by association with modulating ancillary subunits such as KCNE1, KCNE2 and KCNE3, creating a functionally diverse range of channel complexes. Interacts with KCNE1, KCNE2 and KCNE3. Phosphorylated by PKA in cortical synaptosomes. cAMP-dependent phosphorylation inhibits channel activity. Histamine H2 receptor- and PKA-induced phosphorylation extends action potential spike duration, reduces action potential spike amplitude, sustains maximum firing frequency in hippocampal interneurons; also reduces the incidence of high-frequency oscillations in hippocampal CA3 pyramidal cell layers. Expressed in neurons of the visual cortex during postnatal development. Expressed in neurons of the globus pallidus at postnatal age day 7 (P7), onward. Expressed in thalamic relay neurons. Expressed in neurons in layer IV and deeper cortical layers of the neocortex. Expressed in hippocampal interneurons. Expressed in nonpyramidal interneurons in the basolateral amygdala. Expressed in retinal ganglion cells (at protein level). Widely expressed in the brain. Expressed in numerous thalamic relay neurons throughout the dorsal thalamus. Expressed in interneurons of the deep layers V-VI of the cerebral cortex, the CA1 and CA3 pyramidal and dentate gyrus (DG) granule cells of the hippocampus, in neurons of the caudate-putamen, globus pallidus and subthalamic nucleus. Also expressed in the optic layer of interior colliculus, the inferior colliculus, the red nucleus, the medial geniculate, the ventral lateral lemiscus, the reticulotegmental nucleus and in the deep cerebellar nuclei. Expressed in globus pallidus (GP) neurons.

The protein localises to the cell membrane. The protein resides in the membrane. It is found in the perikaryon. It localises to the cell projection. Its subcellular location is the axon. The protein localises to the synapse. The protein resides in the synaptosome. It is found in the dendrite. It localises to the postsynaptic cell membrane. Its subcellular location is the presynaptic cell membrane. The protein localises to the apical cell membrane. The protein resides in the basolateral cell membrane. The enzyme catalyses K(+)(in) = K(+)(out). Its activity is regulated as follows. Inhibited by Stichodactyla helianthus peptide ShK. Inhibited by millimolar levels of tetraethylammonium (TEA). Contrary to other channels, inhibited only by millimolar levels of 4-aminopyridine (4-AP). Functionally, voltage-gated potassium channel that mediates transmembrane potassium transport in excitable membranes, primarily in the brain. Contributes to the regulation of the fast action potential repolarization and in sustained high-frequency firing in neurons of the central nervous system. Homotetramer channels mediate delayed-rectifier voltage-dependent potassium currents that activate rapidly at high-threshold voltages and inactivate slowly. Forms tetrameric channels through which potassium ions pass in accordance with their electrochemical gradient. The channel alternates between opened and closed conformations in response to the voltage difference across the membrane. Can form functional homotetrameric channels and heterotetrameric channels that contain variable proportions of KCNC1, and possibly other family members as well; channel properties depend on the type of alpha subunits that are part of the channel. Channel properties may be modulated either by the association with ancillary subunits, such as KCNE1, KCNE2 and KCNE3 or indirectly by nitric oxide (NO) through a cGMP- and PKG-mediated signaling cascade, slowing channel activation and deactivation of delayed rectifier potassium channels. Contributes to fire sustained trains of very brief action potentials at high frequency in retinal ganglion cells, thalamocortical and suprachiasmatic nucleus (SCN) neurons and in hippocampal and neocortical interneurons. Sustained maximal action potential firing frequency in inhibitory hippocampal interneurons is negatively modulated by histamine H2 receptor activation in a cAMP- and protein kinase (PKA) phosphorylation-dependent manner. Plays a role in maintaining the fidelity of synaptic transmission in neocortical GABAergic interneurons by generating action potential (AP) repolarization at nerve terminals, thus reducing spike-evoked calcium influx and GABA neurotransmitter release. Required for long-range synchronization of gamma oscillations over distance in the neocortex. Contributes to the modulation of the circadian rhythm of spontaneous action potential firing in suprachiasmatic nucleus (SCN) neurons in a light-dependent manner. This is Voltage-gated potassium channel KCNC2 from Rattus norvegicus (Rat).